We begin with the raw amino-acid sequence, 184 residues long: ATP-dependent protease subunit HslV (184 aa).

T12 is an active-site residue. A166, C169, and T172 together coordinate Na(+).

This sequence belongs to the peptidase T1B family. HslV subfamily. In terms of assembly, a double ring-shaped homohexamer of HslV is capped on each side by a ring-shaped HslU homohexamer. The assembly of the HslU/HslV complex is dependent on binding of ATP.

The protein resides in the cytoplasm. The catalysed reaction is ATP-dependent cleavage of peptide bonds with broad specificity.. Its activity is regulated as follows. Allosterically activated by HslU binding. Functionally, protease subunit of a proteasome-like degradation complex believed to be a general protein degrading machinery. This chain is ATP-dependent protease subunit HslV, found in Brucella ovis (strain ATCC 25840 / 63/290 / NCTC 10512).